Here is an 817-residue protein sequence, read N- to C-terminus: MQQQYPFRDIEQQAQQYWESNATFTATEVSDKPKYYCLSMFPYPSGKLHMGHVRNYTIGDVLSRFHRMRGYNVMQPMGWDAFGLPAENAAIKHNVAPAGWTYSNIEHMKGQLKSLGLAVDWQREIATCKPDYYRWEQWLFTELYKKGLIYKKTATVNWDPVDQTVLANEQVIDGRGWRSGALVEKRDIPQYFMKITAYAEELLADLDKLDGWPEQVKTMQRNWIGKSYGCEVEFPLAVGNGTLKVYTTRPDTLMGATYVAIAAEHALATQAAKDNPALQAFIEECKRGSVAEADLATAEKKGMNSGLFVLHPITGEKLPVWVANYVLISYGEGAVMAVPAHDERDFEFASKYKLPIKAVIKPAHGELELPLQAAYTEHGILFDSGDFNGLDFSQASDAIAAALAAKNLGKRRTQYRLRDWGISRQRYWGCPIPIVHCPSCGEVPVPAEQLPVVLPEDVVMDGVGSPIKKDPAFYETTCPSCGEKATRETDTMDTFVESSWYFARYASFDAHSSMVDERANYWLPVDQYIGGIEHAILHLLYARFFNKLMRDVGLVRHDEPFTKLLTQGMVLKDGSKMSKSKGNTVDPQELIDNYGADTARLFMMFAAPPEQSLEWSDAGVEGAHRFLKRVWTAVANHVESGIVAAFTMGDLSAELKAFRRQLHQTIEKVTDDYGRRHAFNTAIAAVMELMNAYAKIEGHDATTRAIRQEALENIILLLSPIVPHICHALWQALRPGTQLLDTRWPVANKAAMVQDEIELVLQVNGKLRGSMTVSRTLDKAAIEALAVQQECIQKYLAEGSVRKIIVVPNKLVNIVVG.

The 'HIGH' region motif lies at 42–52; it reads PYPSGKLHMGH. Positions 576–580 match the 'KMSKS' region motif; that stretch reads KMSKS. ATP is bound at residue K579.

Belongs to the class-I aminoacyl-tRNA synthetase family.

The protein localises to the cytoplasm. It catalyses the reaction tRNA(Leu) + L-leucine + ATP = L-leucyl-tRNA(Leu) + AMP + diphosphate. The polypeptide is Leucine--tRNA ligase (Methylobacillus flagellatus (strain ATCC 51484 / DSM 6875 / VKM B-1610 / KT)).